A 138-amino-acid chain; its full sequence is Nucleoside diphosphate kinase (138 aa).

The ATP site is built by Lys9, Phe57, Arg85, Thr91, Arg102, and Asn112. Catalysis depends on His115, which acts as the Pros-phosphohistidine intermediate.

Belongs to the NDK family. Homotetramer. Mg(2+) is required as a cofactor.

The protein resides in the cytoplasm. The catalysed reaction is a 2'-deoxyribonucleoside 5'-diphosphate + ATP = a 2'-deoxyribonucleoside 5'-triphosphate + ADP. It carries out the reaction a ribonucleoside 5'-diphosphate + ATP = a ribonucleoside 5'-triphosphate + ADP. Functionally, major role in the synthesis of nucleoside triphosphates other than ATP. The ATP gamma phosphate is transferred to the NDP beta phosphate via a ping-pong mechanism, using a phosphorylated active-site intermediate. This is Nucleoside diphosphate kinase from Deinococcus radiodurans (strain ATCC 13939 / DSM 20539 / JCM 16871 / CCUG 27074 / LMG 4051 / NBRC 15346 / NCIMB 9279 / VKM B-1422 / R1).